Consider the following 322-residue polypeptide: Solute carrier family 35 member B1 (322 aa).

Transmembrane regions (helical) follow at residues 12–32 (LRLP…GILQ), 51–71 (FALT…KILI), 85–105 (WLYA…NSAL), 136–156 (YPLA…LFMY), 168–188 (TVGF…LTGV), 210–230 (LWST…WEFL), 243–263 (ILLF…TVVY), and 285–305 (VILF…LVFL). Positions 318–322 (KKTSH) match the Di-lysine motif motif.

The protein belongs to the nucleotide-sugar transporter family. SLC35B subfamily.

The protein localises to the endoplasmic reticulum membrane. The catalysed reaction is ADP(in) + ATP(out) = ADP(out) + ATP(in). It catalyses the reaction UDP(out) + ATP(in) = UDP(in) + ATP(out). It carries out the reaction UTP(out) + ATP(in) = UTP(in) + ATP(out). The enzyme catalyses dATP(out) + ATP(in) = dATP(in) + ATP(out). Its function is as follows. ATP:ADP antiporter that catalyzes the exchange of ATP and ADP across the endoplasmic reticulum (ER) membrane. Imports ATP from the cytosol to the ER lumen and exports ADP in the opposite direction. Regulates ER energy metabolism and protein biogenesis. Appears to be part of a calcium-dependent ER to cytosol low energy response axis, where calcium efflux from ER to the cytosol triggers ATP import into the ER lumen to maintain sufficient ATP supply. Provides ATP to ER chaperone HSPA5 that drives protein folding and trafficking in the ER. Can transport dATP, UTP or UDP in exchange for ATP, but the physiological relevance of this process remains to be established. This chain is Solute carrier family 35 member B1 (Slc35b1), found in Mus musculus (Mouse).